The chain runs to 141 residues: Hemoglobin subunit alpha (141 aa).

Residues Val1–Arg141 form the Globin domain. Ser3 is modified (phosphoserine). N6-succinyllysine occurs at positions 7 and 11. At Lys16 the chain carries N6-acetyllysine; alternate. Residue Lys16 is modified to N6-succinyllysine; alternate. Tyr24 carries the phosphotyrosine modification. Ser35 carries the phosphoserine modification. Lys40 carries the post-translational modification N6-succinyllysine. Ser49 bears the Phosphoserine mark. His58 lines the O2 pocket. Residue His87 participates in heme b binding. Residue Ser102 is modified to Phosphoserine. Thr108 is subject to Phosphothreonine. Phosphoserine is present on Ser124. 2 positions are modified to phosphothreonine: Thr134 and Thr137. A Phosphoserine modification is found at Ser138.

It belongs to the globin family. Heterotetramer of two alpha chains and two beta chains. Red blood cells.

In terms of biological role, involved in oxygen transport from the lung to the various peripheral tissues. Its function is as follows. Hemopressin acts as an antagonist peptide of the cannabinoid receptor CNR1. Hemopressin-binding efficiently blocks cannabinoid receptor CNR1 and subsequent signaling. In Tupaia glis (Common tree shrew), this protein is Hemoglobin subunit alpha (HBA).